Here is a 292-residue protein sequence, read N- to C-terminus: Glutamate racemase (292 aa).

Substrate contacts are provided by residues 10–11 (DS) and 42–43 (YG). The active-site Proton donor/acceptor is Cys-73. 74 to 75 (NS) contributes to the substrate binding site. Cys-186 functions as the Proton donor/acceptor in the catalytic mechanism. 187 to 188 (TH) contacts substrate.

Belongs to the aspartate/glutamate racemases family.

The catalysed reaction is L-glutamate = D-glutamate. The protein operates within cell wall biogenesis; peptidoglycan biosynthesis. Functionally, provides the (R)-glutamate required for cell wall biosynthesis. This is Glutamate racemase from Beutenbergia cavernae (strain ATCC BAA-8 / DSM 12333 / CCUG 43141 / JCM 11478 / NBRC 16432 / NCIMB 13614 / HKI 0122).